Consider the following 518-residue polypeptide: Alpha-ionylideneethane synthase abl3 (518 aa).

Disordered regions lie at residues 294-355 (AAPG…SVFE) and 440-466 (KAPP…QRSK). The span at 299–339 (TSSDNSSDNRSSSISSTSSTGTDGSGAGDASSVHSSGVHSD) shows a compositional bias: low complexity.

Belongs to the alpha-ionylideneethane synthase family.

Its pathway is hormone biosynthesis. Alpha-ionylideneethane synthase involved in the biosynthesis of abscisic acid (ABA), a phytohormone that acts antagonistically toward salicylic acid (SA), jasmonic acid (JA) and ethylene (ETH) signaling, to impede plant defense responses. During pathogen-host interaction, ABA plays a dual role in disease severity by increasing plant susceptibility and accelerating pathogenesis in the fungus itself. The first step of the pathway catalyzes the reaction from farnesyl diphosphate to alpha-ionylideneethane performed by the alpha-ionylideneethane synthase ABA3 via a three-step reaction mechanism involving 2 neutral intermediates, beta-farnesene and allofarnesene. The cytochrome P450 monooxygenase ABA1 might then be involved in the conversion of alpha-ionylideneethane to alpha-ionylideneacetic acid. Alpha-ionylideneacetic acid is further converted to abscisic acid in 2 steps involving the cytochrome P450 monooxygenase ABA2 and the short-chain dehydrogenase/reductase ABA4, via the intermediates 1'-deoxy-ABA or 1',4'-trans-diol-ABA, depending on the order of action of these 2 enzymes. ABA2 is responsible for the hydroxylation of carbon atom C-1' and ABA4 might be involved in the oxidation of the C-4' carbon atom. The sequence is that of Alpha-ionylideneethane synthase abl3 from Pyricularia oryzae (strain Y34) (Rice blast fungus).